The sequence spans 117 residues: Anti-sigma F factor antagonist (117 aa).

The STAS domain maps to L3–L113. S58 is modified (phosphoserine).

This sequence belongs to the anti-sigma-factor antagonist family. Post-translationally, phosphorylated by SpoIIAB on a serine residue.

In the phosphorylated form it could act as an anti-anti-sigma factor that counteracts SpoIIAB and thus releases sigma f from inhibition. The protein is Anti-sigma F factor antagonist (spoIIAA) of Bacillus subtilis (strain 168).